A 161-amino-acid polypeptide reads, in one-letter code: SsrA-binding protein (161 aa).

The tract at residues 138–161 (DKRTDSKEKDWNRDKARIMKSSLR) is disordered. Over residues 139 to 154 (KRTDSKEKDWNRDKAR) the composition is skewed to basic and acidic residues.

The protein belongs to the SmpB family.

Its subcellular location is the cytoplasm. In terms of biological role, required for rescue of stalled ribosomes mediated by trans-translation. Binds to transfer-messenger RNA (tmRNA), required for stable association of tmRNA with ribosomes. tmRNA and SmpB together mimic tRNA shape, replacing the anticodon stem-loop with SmpB. tmRNA is encoded by the ssrA gene; the 2 termini fold to resemble tRNA(Ala) and it encodes a 'tag peptide', a short internal open reading frame. During trans-translation Ala-aminoacylated tmRNA acts like a tRNA, entering the A-site of stalled ribosomes, displacing the stalled mRNA. The ribosome then switches to translate the ORF on the tmRNA; the nascent peptide is terminated with the 'tag peptide' encoded by the tmRNA and targeted for degradation. The ribosome is freed to recommence translation, which seems to be the essential function of trans-translation. The polypeptide is SsrA-binding protein (Aliivibrio fischeri (strain ATCC 700601 / ES114) (Vibrio fischeri)).